A 233-amino-acid polypeptide reads, in one-letter code: 5'-methylthioadenosine/S-adenosylhomocysteine nucleosidase (233 aa).

Residue Glu-12 is the Proton acceptor of the active site. Residues Gly-78, Ile-156, and 177 to 178 (ME) contribute to the substrate site. The active-site Proton donor is Asp-201.

This sequence belongs to the PNP/UDP phosphorylase family. MtnN subfamily.

The enzyme catalyses S-adenosyl-L-homocysteine + H2O = S-(5-deoxy-D-ribos-5-yl)-L-homocysteine + adenine. The catalysed reaction is S-methyl-5'-thioadenosine + H2O = 5-(methylsulfanyl)-D-ribose + adenine. It carries out the reaction 5'-deoxyadenosine + H2O = 5-deoxy-D-ribose + adenine. The protein operates within amino-acid biosynthesis; L-methionine biosynthesis via salvage pathway; S-methyl-5-thio-alpha-D-ribose 1-phosphate from S-methyl-5'-thioadenosine (hydrolase route): step 1/2. Catalyzes the irreversible cleavage of the glycosidic bond in both 5'-methylthioadenosine (MTA) and S-adenosylhomocysteine (SAH/AdoHcy) to adenine and the corresponding thioribose, 5'-methylthioribose and S-ribosylhomocysteine, respectively. Also cleaves 5'-deoxyadenosine, a toxic by-product of radical S-adenosylmethionine (SAM) enzymes, into 5-deoxyribose and adenine. The protein is 5'-methylthioadenosine/S-adenosylhomocysteine nucleosidase of Listeria monocytogenes serotype 4a (strain HCC23).